The primary structure comprises 106 residues: MIPGEILPEDGEITLNAGRDTLTVEVTNTGDRPAQVGSHYHFYEVNDHLHFDREPTRGFRLDIAAGTAVRFEPGQSRTVQLVRYAGSGDIYGFQGRVMGPATGESA.

Belongs to the urease beta subunit family. Heterotrimer of UreA (gamma), UreB (beta) and UreC (alpha) subunits. Three heterotrimers associate to form the active enzyme.

The protein resides in the cytoplasm. The catalysed reaction is urea + 2 H2O + H(+) = hydrogencarbonate + 2 NH4(+). It participates in nitrogen metabolism; urea degradation; CO(2) and NH(3) from urea (urease route): step 1/1. This is Urease subunit beta from Alkalilimnicola ehrlichii (strain ATCC BAA-1101 / DSM 17681 / MLHE-1).